The following is a 237-amino-acid chain: V-type proton ATPase subunit E3 (237 aa).

An N-acetylmethionine modification is found at methionine 1. Residues 9–67 adopt a coiled-coil conformation; that stretch reads QIQQMVRFIRQEAEEKANEISISSEEEFNIEKLQLVEAEKKKIRQEYEKKEKQVDVRKK.

This sequence belongs to the V-ATPase E subunit family. As to quaternary structure, V-ATPase is a heteromultimeric enzyme composed of a peripheral catalytic V1 complex (components A to H) attached to an integral membrane V0 proton pore complex (components: a, c, c'', d and e).

Its subcellular location is the vacuole membrane. Subunit of the peripheral V1 complex of vacuolar ATPase essential for assembly or catalytic function. V-ATPase is responsible for acidifying a variety of intracellular compartments in eukaryotic cells. This Arabidopsis thaliana (Mouse-ear cress) protein is V-type proton ATPase subunit E3 (VHA-E3).